The following is a 138-amino-acid chain: MRGLSRNSGAAAIFAILLILAVHNWSVAVSSQSTEFAGDFPPFETECRGTIAECSVSAALGDGGDLFYGGGEMGEEFEMDSEINRRILATRRYISYGALRRNTIPCSRRGASYYNCRRGAQANPYSRGCSAITRCRRS.

Positions 1–28 are cleaved as a signal peptide; that stretch reads MRGLSRNSGAAAIFAILLILAVHNWSVA. The propeptide at 29–88 is removed in mature form; that stretch reads VSSQSTEFAGDFPPFETECRGTIAECSVSAALGDGGDLFYGGGEMGEEFEMDSEINRRIL. 2 disulfide bridges follow: Cys106/Cys116 and Cys129/Cys135.

The protein belongs to the plant rapid alkalinization factor (RALF) family. In terms of processing, proteolytically cleaved, probably by SBT6.1 (S1P), a subtilisin-like serine protease (subtilase).

It localises to the secreted. Cell signaling peptide that may regulate plant stress, growth, and development. Mediates a rapid alkalinization of extracellular space by mediating a transient increase in the cytoplasmic Ca(2+) concentration leading to a calcium-dependent signaling events through a cell surface receptor and a concomitant activation of some intracellular mitogen-activated protein kinases. Negatively regulates brassinolide (BL)-mediated signaling pathway (e.g. BL-induced hypocotyl elongation and branching limitation). This chain is Rapid alkalinization factor 23 (RALF23), found in Arabidopsis thaliana (Mouse-ear cress).